Consider the following 1256-residue polypeptide: MLFKLLQRQTYTCLSHRYGLYVCFLGVVVTIVSAFQFGEVVLEWSRDQYHVLFDSYRDNIAGKSFQNRLCLPMPIDVVYTWVNGTDLELLKELQQVREQMEEEQKAMREILGKNTTEPTKKSEKQLECLLTHCIKVPMLVLDPALPANITLKDLPSLYPSFHSASDIFNVAKPKNPSTNVSVVVFDSTKDVEDAHSGLLKGNSRQTVWRGYLTTDKEVPGLVLMQDLAFLSGFPPTFKETNQLKTKLPENLSSKVKLLQLYSEASVALLKLNNPKDFQELNKQTKKNMTIDGKELTISPAYLLWDLSAISQSKQDEDISASRFEDNEELRYSLRSIERHAPWVRNIFIVTNGQIPSWLNLDNPRVTIVTHQDVFRNLSHLPTFSSPAIESHIHRIEGLSQKFIYLNDDVMFGKDVWPDDFYSHSKGQKVYLTWPVPNCAEGCPGSWIKDGYCDKACNNSACDWDGGDCSGNSGGSRYIAGGGGTGSIGVGQPWQFGGGINSVSYCNQGCANSWLADKFCDQACNVLSCGFDAGDCGQDHFHELYKVILLPNQTHYIIPKGECLPYFSFAEVAKRGVEGAYSDNPIIRHASIANKWKTIHLIMHSGMNATTIHFNLTFQNTNDEEFKMQITVEVDTREGPKLNSTAQKGYENLVSPITLLPEAEILFEDIPKEKRFPKFKRHDVNSTRRAQEEVKIPLVNISLLPKDAQLSLNTLDLQLEHGDITLKGYNLSKSALLRSFLMNSQHAKIKNQAIITDETNDSLVAPQEKQVHKSILPNSLGVSERLQRLTFPAVSVKVNGHDQGQNPPLDLETTARFRVETHTQKTIGGNVTKEKPPSLIVPLESQMTKEKKITGKEKENSRMEENAENHIGVTEVLLGRKLQHYTDSYLGFLPWEKKKYFQDLLDEEESLKTQLAYFTDSKNTGRQLKDTFADSLRYVNKILNSKFGFTSRKVPAHMPHMIDRIVMQELQDMFPEEFDKTSFHKVRHSEDMQFAFSYFYYLMSAVQPLNISQVFDEVDTDQSGVLSDREIRTLATRIHELPLSLQDLTGLEHMLINCSKMLPADITQLNNIPPTQESYYDPNLPPVTKSLVTNCKPVTDKIHKAYKDKNKYRFEIMGEEEIAFKMIRTNVSHVVGQLDDIRKNPRKFVCLNDNIDHNHKDAQTVKAVLRDFYESMFPIPSQFELPREYRNRFLHMHELQEWRAYRDKLKFWTHCVLATLIMFTIFSFFAEQLIALKRKIFPRRRIHKEASPNRIRV.

The helical transmembrane segment at 22–42 (VCFLGVVVTIVSAFQFGEVVL) threads the bilayer. Asn83, Asn114, Asn148, Asn179, and Asn250 each carry an N-linked (GlcNAc...) asparagine glycan. 4 disulfides stabilise this stretch: Cys438/Cys461, Cys452/Cys468, Cys505/Cys528, and Cys519/Cys535. LNR repeat units follow at residues 438 to 473 (CAEG…GNSG) and 505 to 545 (CNQG…ELYK). The Ca(2+) site is built by Asp449, Asp464, Asp467, Asp516, Asp531, and Asp534. 5 N-linked (GlcNAc...) asparagine glycosylation sites follow: Asn614, Asn699, Asn729, Asn829, and Asn1009. In terms of domain architecture, DMAP1-binding spans 699–798 (NISLLPKDAQ…TFPAVSVKVN (100 aa)). Residues 1005 to 1040 (VQPLNISQVFDEVDTDQSGVLSDREIRTLATRIHEL) form the EF-hand domain. Residues Asp1018, Asp1020, Ser1022, and Glu1029 each coordinate Ca(2+). N-linked (GlcNAc...) asparagine glycosylation is present at Asn1129. A helical membrane pass occupies residues 1215–1235 (VLATLIMFTIFSFFAEQLIAL).

It belongs to the stealth family. As to quaternary structure, hexamer of two alpha, two beta and two gamma (GNPTG) subunits; disulfide-linked. The alpha and/or the beta subunits of the enzyme constitute the catalytic subunits. Interacts with LYSET; facilitates proper localization of GNPTAB. The alpha- and beta-subunits are generated by a proteolytic cleavage by MBTPS1 protease at the Lys-928-Asp-929 bond. As to expression, expressed in the heart, whole brain, placenta, lung, liver, skeletal muscle, kidney and pancreas.

It is found in the golgi apparatus membrane. It catalyses the reaction N(4)-[alpha-D-mannosyl-(1-&gt;2)-alpha-D-mannosyl-(glycan)]-L-asparaginyl-[protein] + UDP-N-acetyl-alpha-D-glucosamine = N(4)-[6-(N-acetyl-alpha-D-glucosaminyl-1-phospho)-alpha-D-mannosyl-(1-&gt;2)-alpha-D-mannosyl-(glycan)]-L-asparaginyl-[protein] + UMP + H(+). Functionally, catalyzes the formation of mannose 6-phosphate (M6P) markers on high mannose type oligosaccharides in the Golgi apparatus. M6P residues are required to bind to the M6P receptors (MPR), which mediate the vesicular transport of lysosomal enzymes to the endosomal/prelysosomal compartment. In Homo sapiens (Human), this protein is N-acetylglucosamine-1-phosphotransferase subunits alpha/beta (GNPTAB).